Here is a 183-residue protein sequence, read N- to C-terminus: Threonylcarbamoyl-AMP synthase (183 aa).

One can recognise a YrdC-like domain in the interval 1 to 183 (MNITQIIEKL…LFTNQLVRQG (183 aa)).

Belongs to the SUA5 family. TsaC subfamily.

The protein localises to the cytoplasm. It carries out the reaction L-threonine + hydrogencarbonate + ATP = L-threonylcarbamoyladenylate + diphosphate + H2O. Functionally, required for the formation of a threonylcarbamoyl group on adenosine at position 37 (t(6)A37) in tRNAs that read codons beginning with adenine. Catalyzes the conversion of L-threonine, HCO(3)(-)/CO(2) and ATP to give threonylcarbamoyl-AMP (TC-AMP) as the acyladenylate intermediate, with the release of diphosphate. This is Threonylcarbamoyl-AMP synthase from Histophilus somni (strain 2336) (Haemophilus somnus).